Consider the following 100-residue polypeptide: Protein translation factor SUI1 homolog (100 aa).

This sequence belongs to the SUI1 family.

The polypeptide is Protein translation factor SUI1 homolog (Sulfurisphaera tokodaii (strain DSM 16993 / JCM 10545 / NBRC 100140 / 7) (Sulfolobus tokodaii)).